Here is a 316-residue protein sequence, read N- to C-terminus: Adenine deaminase (316 aa).

Histidine 14, histidine 16, and histidine 194 together coordinate Zn(2+). The active-site Proton donor is the glutamate 197. Residue aspartate 275 coordinates Zn(2+). Residue aspartate 276 participates in substrate binding.

This sequence belongs to the metallo-dependent hydrolases superfamily. Adenosine and AMP deaminases family. Adenine deaminase type 2 subfamily. Zn(2+) serves as cofactor.

It carries out the reaction adenine + H2O + H(+) = hypoxanthine + NH4(+). Functionally, catalyzes the hydrolytic deamination of adenine to hypoxanthine. Plays an important role in the purine salvage pathway and in nitrogen catabolism. The chain is Adenine deaminase from Stutzerimonas stutzeri (strain A1501) (Pseudomonas stutzeri).